Here is a 406-residue protein sequence, read N- to C-terminus: MFMDFAMLPPEVNSTRMYSGPGAGSLWAAAAAWDQVSAELQSAAETYRSVIASLTGWQWLGPSSVRMGAAVTPYVEWLTTTAAQARQTATQITAAATGFEQAFAMTVPPPAIMANRAQVLSLIATNFFGQNTAAIAALETQYAEMWEQDATAMYDYAATSAAARTLTPFTSPQQDTNSAGLPAQSAEVSRATANAGAADGNWLGNLLEEIGILLLPIAPELTPFFLEAGEIVNAIPFPSIVGDEFCLLDGLLAWYATIGSINNINSMGTGIIGAEKNLGILPELGSAAAAAAPPPADIAPAFLAPLTSMAKSLSDGALRGPGEVSAAMRGAGTIGQMSVPPAWKAPAVTTVRAFDATPMTTLPGGDAPAAGVPGLPGMPASGAGRAGVVPRYGVRLTVMTRPLSGG.

The protein belongs to the mycobacterial PPE family.

This is an uncharacterized protein from Mycobacterium tuberculosis (strain CDC 1551 / Oshkosh).